The sequence spans 298 residues: Glutamyl-Q tRNA(Asp) synthetase (298 aa).

L-glutamate-binding positions include 12–16 (RFAPT) and glutamate 48. The short motif at 15 to 25 (PTPSGYLHFGS) is the 'HIGH' region element. Zn(2+) is bound by residues cysteine 104, cysteine 106, tyrosine 118, and cysteine 122. L-glutamate contacts are provided by tyrosine 175 and arginine 193. The 'KMSKS' region signature appears at 231 to 235 (KLGKS). An ATP-binding site is contributed by lysine 234.

This sequence belongs to the class-I aminoacyl-tRNA synthetase family. GluQ subfamily. The cofactor is Zn(2+).

Its function is as follows. Catalyzes the tRNA-independent activation of glutamate in presence of ATP and the subsequent transfer of glutamate onto a tRNA(Asp). Glutamate is transferred on the 2-amino-5-(4,5-dihydroxy-2-cyclopenten-1-yl) moiety of the queuosine in the wobble position of the QUC anticodon. The chain is Glutamyl-Q tRNA(Asp) synthetase from Pseudomonas fluorescens (strain ATCC BAA-477 / NRRL B-23932 / Pf-5).